Consider the following 430-residue polypeptide: MKMNVLQTLKERGFIEQTTHDQELEDLLSGEQVSCYIGFDPTASSLHVGSLVPIMSLAHMQRAGHRPIALVGGGTGLVGDPSGKTEMRKLLTLEDVNNNAEGIRAQLARFIDFDKGAVQENNANWLVGLKYIEFLRDFGRHFSVNRMIKAESYRMRLESEEGLSFIEFNYMLLQAYDFLHLFNEYGCQLQMGGSDQWGNIVAGIDLIRRAKGGSAYGITFPLITTSAGIKMGKTHKGAVWLDPERTSPYEYFQFWVNTHDDDVPRFLALFTFLPMEQINKVKDLDGAELNLAKTILAFEATTLAHGRDQAVGALEAAYNMFGAREIPADLLADSSIPREGAAKAEDSVPTTVMEQARLQEGVPAFELFDEIGLCASRGAARRLLGQGGGYVNNERIDSFDYKISLVDMKDNEIILRAGKKNYHRLVLSEK.

Tyrosine 36 provides a ligand contact to L-tyrosine. Positions 41–50 (PTASSLHVGS) match the 'HIGH' region motif. L-tyrosine-binding residues include tyrosine 170 and glutamine 174. The short motif at 230 to 234 (KMGKT) is the 'KMSKS' region element. Lysine 233 is a binding site for ATP. In terms of domain architecture, S4 RNA-binding spans 362–427 (VPAFELFDEI…GKKNYHRLVL (66 aa)).

It belongs to the class-I aminoacyl-tRNA synthetase family. TyrS type 1 subfamily. As to quaternary structure, homodimer.

It localises to the cytoplasm. It carries out the reaction tRNA(Tyr) + L-tyrosine + ATP = L-tyrosyl-tRNA(Tyr) + AMP + diphosphate + H(+). Its function is as follows. Catalyzes the attachment of tyrosine to tRNA(Tyr) in a two-step reaction: tyrosine is first activated by ATP to form Tyr-AMP and then transferred to the acceptor end of tRNA(Tyr). The sequence is that of Tyrosine--tRNA ligase from Desulfatibacillum aliphaticivorans.